Here is a 248-residue protein sequence, read N- to C-terminus: MIAFIEPFLASKSLANNSQQSYRYDLRQFCQQVGQRINPETLALYQQSLSGLTVAAKKRKLSTVNQFLYYLYQQRVLADYFKMDDRIEASFSLKPQLTRLDTSAFYAETAFLKGQLIALLILELGLTPSEIAGLRLADFDLGLQVLRLQSHRGIRVMTLSRTLLPFLERAAEAQQLYLFDHDAKPFSRQWFFNQLRDFLESIGCAELSAQSLREQFILNEKAAGKSIIEVAQLLGLKSPITLEKYYKM.

One can recognise a Core-binding (CB) domain in the interval 1 to 72 (MIAFIEPFLA…TVNQFLYYLY (72 aa)). Residues 92 to 248 (SLKPQLTRLD…PITLEKYYKM (157 aa)) form the Tyr recombinase domain. The active site involves Arg-213. Tyr-245 acts as the O-(3'-phospho-DNA)-tyrosine intermediate in catalysis.

The protein belongs to the 'phage' integrase family. XerD-like subfamily.

The protein localises to the cytoplasm. In terms of biological role, putative tyrosine recombinase. Not involved in the cutting and rejoining of the recombining DNA molecules on dif(SL) site. The polypeptide is Tyrosine recombinase XerD-like (Streptococcus equi subsp. zooepidemicus (strain MGCS10565)).